A 114-amino-acid chain; its full sequence is Putative ANKRD40 C-terminal-like protein (114 aa).

The chain is Putative ANKRD40 C-terminal-like protein from Homo sapiens (Human).